Here is a 305-residue protein sequence, read N- to C-terminus: MHPPAPALLIINGKGAGNEEVRLAVQKLRDENQTLHVRVTWEQGDAARYVQEACQLGVATLIAGGGDGTINEVAAALAALPAKGRPVLGILPLGTANDFAMACNIPLIPEQALRLAVKGRAVPIDLAKVNDQRYFINMATGGFGTRITTETPEKLKAALGGVSYFIHGLLRMDTLKADRCEIRGPDFHWSGDALVIGIGNGKQAGGGQQLCPDALINDGLLQLRLLTADELLPTLIASLFNDEENKNVIGAALPWLEIDAPHEMTFNLDGEPLKGRHFRIEVLPNAIECRLPPNCELLGQTQSSQ.

The 133-residue stretch at 2–134 (HPPAPALLII…DLAKVNDQRY (133 aa)) folds into the DAGKc domain. Residues threonine 40, 66 to 72 (GDGTINE), and threonine 95 contribute to the ATP site. Residues leucine 215, aspartate 218, and leucine 220 each coordinate Mg(2+). The Proton acceptor role is filled by glutamate 271.

Belongs to the diacylglycerol/lipid kinase family. YegS lipid kinase subfamily. It depends on Mg(2+) as a cofactor. Ca(2+) serves as cofactor.

The protein resides in the cytoplasm. In terms of biological role, probably phosphorylates lipids; the in vivo substrate is unknown. In Serratia proteamaculans (strain 568), this protein is Probable lipid kinase YegS-like.